Reading from the N-terminus, the 652-residue chain is MGNLQSEPSAGGGSRKVQPSDRAPDSRRTSLVEPEMTSQAMRLTRGLGVWFPGSATPPGLMVPREPQASPSTLPLTLERPSPVMPPPEEAAAVSAPPPAPAGTLLPGPSKWQKPAGTPVPRIRRLLEASHRGQGDPPSLRPLKPPPPPRQLSVKDTVPRAPSQFPPPLETWKPPPPLPSERQPADRRITPALATPASPPTESQAGPRNQGQTAGRARGGAPPHAGEGEMAQPADSESGLSLLCKITFKSRPSLAPPAASSSLAAKASLGGGGGGGLFAASGAISYAEVLKQGPLPPGAARPLGEVSRGAQEAEGGDGDGEGCSGPPSAPASQARALPPPPYTTFPGSKPKFDWVSAPDGPERHFRFNGAGGGIGAPRRRAAALSGPWGSPPPPPEQIHSAPGPRRPAPALLAPPTFIFPAPTNGEPMRPGPPGLQELPPLPPPTPPPTLQPPALQPTPLPVAPPLTPGLGHKESALAPTAAPALPPALAADQAPAPSPAPAPTVAEPSPPVSAPAPAAAPIKTRTRRNKGSRAARGATRKDGLHGDGPRERATATVPDSSGGGGGGSGASQTGAANTRAARHWLPFQVLNSCPCKCYCHHQPRHRRLPRNVSAWLSTSTNHLGEPPWVATIKLSGSLVAKLEHYDLQATHSN.

Disordered regions lie at residues 1-39, 52-237, 251-273, 291-473, and 488-576; these read MGNL…MTSQ, PGSA…DSES, PSLA…GGGG, QGPL…GHKE, and LAAD…GAAN. Composition is skewed to basic and acidic residues over residues 18 to 30 and 124 to 133; these read QPSD…RRTS and RLLEASHRGQ. An interaction with GGNBP1 region spans residues 123-486; sequence RRLLEASHRG…APTAAPALPP (364 aa). 2 stretches are compositionally biased toward pro residues: residues 138-149 and 163-178; these read SLRPLKPPPPPR and QFPP…PPLP. Over residues 201-212 the composition is skewed to polar residues; it reads ESQAGPRNQGQT. Low complexity-rich tracts occupy residues 213–230, 251–267, and 299–312; these read AGRA…GEMA, PSLA…AKAS, and ARPL…AQEA. Ser-389 carries the phosphoserine modification. A compositionally biased stretch (low complexity) spans 407-422; that stretch reads APALLAPPTFIFPAPT. 2 stretches are compositionally biased toward pro residues: residues 428-466 and 495-513; these read RPGP…PPLT and APSP…PVSA. The interval 491–652 is interactions with ZNF403/GGNBP2 and OAZ3; that stretch reads DQAPAPSPAP…HYDLQATHSN (162 aa). The span at 523–532 shows a compositional bias: basic residues; that stretch reads TRTRRNKGSR. Residues 538-552 are compositionally biased toward basic and acidic residues; the sequence is TRKDGLHGDGPRERA.

As to quaternary structure, interacts with FANCL, GGNBP1 and ZNF403/GGNBP2.

In terms of biological role, may be involved in spermatogenesis. The sequence is that of Gametogenetin (GGN) from Homo sapiens (Human).